Consider the following 616-residue polypeptide: Homeodomain-interacting protein kinase 4 (616 aa).

A Protein kinase domain is found at 11 to 347 (YDIIEVLGKG…PSAALRHPFV (337 aa)). ATP contacts are provided by residues 17 to 25 (LGKGTFGEV) and K40. Catalysis depends on D136, which acts as the Proton acceptor. The tract at residues 487–616 (HKARKAPAGS…SFLQHVGGHH (130 aa)) is disordered. Residues 497-512 (KSDSNFSNLIRLSQAS) are compositionally biased toward polar residues. S512 is subject to Phosphoserine. Residues 542–560 (REGDGPGIKDRPMDAERPG) are compositionally biased toward basic and acidic residues.

It belongs to the protein kinase superfamily. CMGC Ser/Thr protein kinase family. HIPK subfamily. Autophosphorylated. Expressed at moderate levels in lung and white adipose tissues and weakly in brain and liver.

The protein localises to the cytoplasm. The catalysed reaction is L-seryl-[protein] + ATP = O-phospho-L-seryl-[protein] + ADP + H(+). It carries out the reaction L-threonyl-[protein] + ATP = O-phospho-L-threonyl-[protein] + ADP + H(+). Its function is as follows. Protein kinase that phosphorylates murine TP53 at Ser-9, and thus induces TP53 repression of BIRC5 promoter. May act as a corepressor of transcription factors (Potential). The chain is Homeodomain-interacting protein kinase 4 (Hipk4) from Mus musculus (Mouse).